The sequence spans 485 residues: P2X purinoceptor 2 (485 aa).

Over 1–43 (MAAAQPRLPAGAAMVRRLARGCWSAFWDYETPKVIVVRNRRLG) the chain is Cytoplasmic. Cystine bridges form between C22–C443, C126–C177, C137–C160, C143–C171, C227–C237, and C271–C280. The helical transmembrane segment at 44-64 (FVHRMVQLLILLYFVWYVFIV) threads the bilayer. Topologically, residues 65–339 (QKSYQDSETG…IVHGQAGKFS (275 aa)) are extracellular. K82 and K84 together coordinate ATP. The N-linked (GlcNAc...) asparagine glycan is linked to N195. An ATP-binding site is contributed by T197. N-linked (GlcNAc...) asparagine glycosylation is present at N252. ATP is bound by residues S297, N301, and R303. An N-linked (GlcNAc...) asparagine glycan is attached at N311. Residue K321 participates in ATP binding. Residues 322–335 (AYGIRIDVIVHGQA) are pore-forming motif. The chain crosses the membrane as a helical span at residues 340 to 360 (LIPTIINLATALTSIGVGSFL). Residues 361 to 485 (CDWILLTFMN…STDPKGLAQL (125 aa)) are Cytoplasmic-facing. Residues 406–485 (PPPSHYSQDQ…STDPKGLAQL (80 aa)) form a disordered region. Over residues 420–436 (PSGEGPALGEGAELPLA) the composition is skewed to low complexity. Residues 469-478 (PSQQDSTSTD) show a composition bias toward polar residues.

This sequence belongs to the P2X receptor family. Homotrimer and heterotrimer; functional P2XRs are organized as homomeric and heteromeric trimers. Homotrimer. Forms heterotrimer with P2XR1. Forms heterotrimer with P2XR3. Forms heterotrimer with P2XR6.

It is found in the cell membrane. The catalysed reaction is Ca(2+)(in) = Ca(2+)(out). It catalyses the reaction K(+)(in) = K(+)(out). The enzyme catalyses Na(+)(in) = Na(+)(out). Its activity is regulated as follows. Fast activation by external ATP. Exhibits slow desensitization during prolonged ATP activation. Not sensitive to the ATP agonist:alpha/beta-methylene-ATP. In terms of biological role, ATP-gated nonselective transmembrane cation channel permeable to potassium, sodium and calcium. Activation by extracellular ATP induces a variety of cellular responses, such as excitatory postsynaptic responses in sensory neurons, neuromuscular junctions (NMJ) formation, hearing, perception of taste and peristalsis. In the inner ear, regulates sound transduction and auditory neurotransmission, outer hair cell electromotility, inner ear gap junctions, and K(+) recycling. Mediates synaptic transmission between neurons and from neurons to smooth muscle. The chain is P2X purinoceptor 2 (P2rx2) from Mus musculus (Mouse).